We begin with the raw amino-acid sequence, 185 residues long: MSSSNSPVKSTGSPFIQSLKPRDNLASMGSSTQLIIKDIGEIHSRLLDHRPVIQGETRYFIKEFEEKRGLREMRVLENLRNSISETNEHDLPKCTDVMQDQLASVLKKLETANHTIHRLQQRELETAKEIASRAGDQMMRAHWEPFMKEQEQRRRTVDEEHRKAVMRLKDQYVTMEKELSKQISF.

A compositionally biased stretch (polar residues) spans 1–16 (MSSSNSPVKSTGSPFI). The segment at 1-24 (MSSSNSPVKSTGSPFIQSLKPRDN) is disordered. Residues 98 to 182 (MQDQLASVLK…VTMEKELSKQ (85 aa)) adopt a coiled-coil conformation.

Belongs to the BLOC1S5 family. Component of the biogenesis of lysosome-related organelles complex 1 (BLOC-1).

Component of the BLOC-1 complex, a complex that is required for normal biogenesis of lysosome-related organelles (LRO), such as platelet dense granules and melanosomes. Plays a role in intracellular vesicle trafficking. In Xenopus tropicalis (Western clawed frog), this protein is Biogenesis of lysosome-related organelles complex 1 subunit 5 (bloc1s5).